A 145-amino-acid polypeptide reads, in one-letter code: 3-hydroxyacyl-[acyl-carrier-protein] dehydratase FabZ (145 aa).

His52 is a catalytic residue.

Belongs to the thioester dehydratase family. FabZ subfamily.

It is found in the cytoplasm. The enzyme catalyses a (3R)-hydroxyacyl-[ACP] = a (2E)-enoyl-[ACP] + H2O. Functionally, involved in unsaturated fatty acids biosynthesis. Catalyzes the dehydration of short chain beta-hydroxyacyl-ACPs and long chain saturated and unsaturated beta-hydroxyacyl-ACPs. This is 3-hydroxyacyl-[acyl-carrier-protein] dehydratase FabZ from Deinococcus radiodurans (strain ATCC 13939 / DSM 20539 / JCM 16871 / CCUG 27074 / LMG 4051 / NBRC 15346 / NCIMB 9279 / VKM B-1422 / R1).